The sequence spans 599 residues: Elongation factor 4 (599 aa).

A tr-type G domain is found at 5–187; it reads SHIRNFSIIA…RLVHTIPAPV (183 aa). Residues 17–22 and 134–137 each bind GTP; these read DHGKST and NKMD.

Belongs to the TRAFAC class translation factor GTPase superfamily. Classic translation factor GTPase family. LepA subfamily.

The protein resides in the cell inner membrane. It catalyses the reaction GTP + H2O = GDP + phosphate + H(+). In terms of biological role, required for accurate and efficient protein synthesis under certain stress conditions. May act as a fidelity factor of the translation reaction, by catalyzing a one-codon backward translocation of tRNAs on improperly translocated ribosomes. Back-translocation proceeds from a post-translocation (POST) complex to a pre-translocation (PRE) complex, thus giving elongation factor G a second chance to translocate the tRNAs correctly. Binds to ribosomes in a GTP-dependent manner. This is Elongation factor 4 from Pseudomonas putida (strain W619).